Consider the following 329-residue polypeptide: CDP-6-deoxy-L-threo-D-glycero-4-hexulose-3-dehydrase reductase (329 aa).

The region spanning 2-93 is the 2Fe-2S ferredoxin-type domain; it reads SLNVKLHPSG…ELDVNYYPEL (92 aa). Positions 37, 42, 45, and 75 each coordinate [2Fe-2S] cluster. Positions 98 to 197 constitute an FAD-binding FR-type domain; sequence KKTYPCKLDS…EGPQGTFFVR (100 aa).

As to quaternary structure, monomer.

It participates in nucleotide-sugar biosynthesis; CDP-ascarylose biosynthesis. Its pathway is bacterial outer membrane biogenesis; lipopolysaccharide biosynthesis. In terms of biological role, participates in the conversion of CDP-6-deoxy-D-glycero-L-threo-4-hexulose to 3,6-dideoxy-D-glycero-D-glycero-4-hexulose together with CDP-6-deoxy-D-glycero-L-threo-4-hexulose-3-dehydrase (E1) in two consecutive steps. The detailed mechanism of E3 is not yet resolved. In Yersinia pseudotuberculosis serotype I (strain IP32953), this protein is CDP-6-deoxy-L-threo-D-glycero-4-hexulose-3-dehydrase reductase (ascD).